The chain runs to 74 residues: ATP synthase subunit 9, mitochondrial (74 aa).

2 helical membrane passes run isoleucine 8–phenylalanine 28 and isoleucine 50–isoleucine 70.

It belongs to the ATPase C chain family. F-type ATPases have 2 components, CF(1) - the catalytic core - and CF(0) - the membrane proton channel. CF(1) has five subunits: alpha(3), beta(3), gamma(1), delta(1), epsilon(1). CF(0) has three main subunits: a, b and c.

Its subcellular location is the mitochondrion membrane. In terms of biological role, this protein is one of the chains of the nonenzymatic membrane component (F0) of mitochondrial ATPase. The protein is ATP synthase subunit 9, mitochondrial (ATP9) of Triticum aestivum (Wheat).